Here is a 280-residue protein sequence, read N- to C-terminus: F-box only protein 27 (280 aa).

Positions 20–67 (VLDLSRLPPELLLLVLSHVPPRTLLMHCRRVCRAWRALVDGQALWLLL) constitute an F-box domain. One can recognise an FBA domain in the interval 101-277 (FCALRPLGRN…VTNSSVIIRV (177 aa)).

As to quaternary structure, part of a SCF (SKP1-cullin-F-box) protein ligase complex. Interacts with SKP1 and CUL1. Detected in brain, heart and muscle.

Functionally, substrate-recognition component of the SCF (SKP1-CUL1-F-box protein)-type E3 ubiquitin ligase complex. Able to recognize and bind complex-type oligosaccharides. The protein is F-box only protein 27 (Fbxo27) of Mus musculus (Mouse).